Reading from the N-terminus, the 490-residue chain is Aspartyl/glutamyl-tRNA(Asn/Gln) amidotransferase subunit B (490 aa).

The protein belongs to the GatB/GatE family. GatB subfamily. Heterotrimer of A, B and C subunits.

The catalysed reaction is L-glutamyl-tRNA(Gln) + L-glutamine + ATP + H2O = L-glutaminyl-tRNA(Gln) + L-glutamate + ADP + phosphate + H(+). The enzyme catalyses L-aspartyl-tRNA(Asn) + L-glutamine + ATP + H2O = L-asparaginyl-tRNA(Asn) + L-glutamate + ADP + phosphate + 2 H(+). Functionally, allows the formation of correctly charged Asn-tRNA(Asn) or Gln-tRNA(Gln) through the transamidation of misacylated Asp-tRNA(Asn) or Glu-tRNA(Gln) in organisms which lack either or both of asparaginyl-tRNA or glutaminyl-tRNA synthetases. The reaction takes place in the presence of glutamine and ATP through an activated phospho-Asp-tRNA(Asn) or phospho-Glu-tRNA(Gln). In Methylorubrum extorquens (strain CM4 / NCIMB 13688) (Methylobacterium extorquens), this protein is Aspartyl/glutamyl-tRNA(Asn/Gln) amidotransferase subunit B.